Reading from the N-terminus, the 496-residue chain is Probable 26S proteasome non-ATPase regulatory subunit 3 (496 aa).

In terms of domain architecture, PCI spans 249-428 (ARFLYYLGRI…GYMRSKESTD (180 aa)). The segment at 458–480 (RYPPKSYGKELESAEERREREQQ) is disordered. The span at 464–480 (YGKELESAEERREREQQ) shows a compositional bias: basic and acidic residues.

Belongs to the proteasome subunit S3 family. In terms of assembly, the 26S proteasome is composed of a core protease, known as the 20S proteasome, capped at one or both ends by the 19S regulatory complex (RC). The RC is composed of at least 18 different subunits in two subcomplexes, the base and the lid, which form the portions proximal and distal to the 20S proteolytic core, respectively.

Acts as a regulatory subunit of the 26 proteasome which is involved in the ATP-dependent degradation of ubiquitinated proteins. This is Probable 26S proteasome non-ATPase regulatory subunit 3 (Dox-A2) from Anopheles gambiae (African malaria mosquito).